A 367-amino-acid chain; its full sequence is MFLKKIYIKNFRNHEETQLTFKSRLVFFIGNNGEGKTNLLESISLLSYLKSFRESDQNQLLRWDTSDTFIRAEFESEGNEYLFEYGIEHSQTKRKKLKVNGEEFKKISDYVGYFRSIVMSPPDILIIEDGNVERRRFLDAFISSTNRYYLKQLIEYERLIKQRNAALKKENASDREIGIWDEPIIEHDSEIREIRTKTIQSLAGYFHQNLLQLSSGKDPYFLTYKPNITSKEEHKQKLIDNLRKDKAIGYTSCGNHRDTLPIGFDDKDLSGFGSQGQKRSAVIALKTACFQMIRDTTGEAPVLLIDDIIRELDVKRREYFVNLISECGQAFFTTTDLEGINEYVGNLTVDKEIYIIDSGKVKVFTEI.

Position 30-37 (30-37 (GNNGEGKT)) interacts with ATP.

It belongs to the RecF family.

It is found in the cytoplasm. Its function is as follows. The RecF protein is involved in DNA metabolism; it is required for DNA replication and normal SOS inducibility. RecF binds preferentially to single-stranded, linear DNA. It also seems to bind ATP. The protein is DNA replication and repair protein RecF of Leptospira biflexa serovar Patoc (strain Patoc 1 / Ames).